A 159-amino-acid polypeptide reads, in one-letter code: SsrA-binding protein (159 aa).

This sequence belongs to the SmpB family.

The protein localises to the cytoplasm. Functionally, required for rescue of stalled ribosomes mediated by trans-translation. Binds to transfer-messenger RNA (tmRNA), required for stable association of tmRNA with ribosomes. tmRNA and SmpB together mimic tRNA shape, replacing the anticodon stem-loop with SmpB. tmRNA is encoded by the ssrA gene; the 2 termini fold to resemble tRNA(Ala) and it encodes a 'tag peptide', a short internal open reading frame. During trans-translation Ala-aminoacylated tmRNA acts like a tRNA, entering the A-site of stalled ribosomes, displacing the stalled mRNA. The ribosome then switches to translate the ORF on the tmRNA; the nascent peptide is terminated with the 'tag peptide' encoded by the tmRNA and targeted for degradation. The ribosome is freed to recommence translation, which seems to be the essential function of trans-translation. This is SsrA-binding protein from Coxiella burnetii (strain CbuG_Q212) (Coxiella burnetii (strain Q212)).